The sequence spans 110 residues: MNLQKISKKIDLKKGAGLIPTIIQDFYSGQVLMLAYMNKESLEKTIETNTTWFWSRSREELWNKGATSGHFQYVKSIHIDCDGDALLIKVEQLGPACHTGNRSCFYTTLI.

Aspartate 80 provides a ligand contact to Mg(2+). A Zn(2+)-binding site is contributed by cysteine 81. 2 residues coordinate Mg(2+): aspartate 82 and aspartate 84. 2 residues coordinate Zn(2+): cysteine 97 and cysteine 104.

It belongs to the PRA-CH family. As to quaternary structure, homodimer. Mg(2+) serves as cofactor. The cofactor is Zn(2+).

Its subcellular location is the cytoplasm. The catalysed reaction is 1-(5-phospho-beta-D-ribosyl)-5'-AMP + H2O = 1-(5-phospho-beta-D-ribosyl)-5-[(5-phospho-beta-D-ribosylamino)methylideneamino]imidazole-4-carboxamide. It functions in the pathway amino-acid biosynthesis; L-histidine biosynthesis; L-histidine from 5-phospho-alpha-D-ribose 1-diphosphate: step 3/9. In terms of biological role, catalyzes the hydrolysis of the adenine ring of phosphoribosyl-AMP. The polypeptide is Phosphoribosyl-AMP cyclohydrolase (Clostridium botulinum (strain Okra / Type B1)).